Consider the following 419-residue polypeptide: Enolase (419 aa).

Q161 is a (2R)-2-phosphoglycerate binding site. E205 (proton donor) is an active-site residue. Mg(2+)-binding residues include D240, E283, and D309. Residues K334, R363, S364, and K385 each coordinate (2R)-2-phosphoglycerate. K334 serves as the catalytic Proton acceptor.

It belongs to the enolase family. Mg(2+) serves as cofactor.

It localises to the cytoplasm. The protein resides in the secreted. Its subcellular location is the cell surface. It carries out the reaction (2R)-2-phosphoglycerate = phosphoenolpyruvate + H2O. It functions in the pathway carbohydrate degradation; glycolysis; pyruvate from D-glyceraldehyde 3-phosphate: step 4/5. Its function is as follows. Catalyzes the reversible conversion of 2-phosphoglycerate (2-PG) into phosphoenolpyruvate (PEP). It is essential for the degradation of carbohydrates via glycolysis. The sequence is that of Enolase from Saccharolobus islandicus (strain M.16.27) (Sulfolobus islandicus).